Here is a 37-residue protein sequence, read N- to C-terminus: Large ribosomal subunit protein bL36c (37 aa).

It belongs to the bacterial ribosomal protein bL36 family.

The protein resides in the plastid. The chain is Large ribosomal subunit protein bL36c from Helicosporidium sp. subsp. Simulium jonesii (Green alga).